The chain runs to 159 residues: Transcriptional repressor NrdR (159 aa).

A zinc finger lies at 3–34; it reads CPFCRHDDTQVVDSRVSEDGAAIRRRRRCSAC. Positions 49–139 constitute an ATP-cone domain; the sequence is PAVVKKDGSR…VYRRFEDVSE (91 aa).

This sequence belongs to the NrdR family. Zn(2+) is required as a cofactor.

Its function is as follows. Negatively regulates transcription of bacterial ribonucleotide reductase nrd genes and operons by binding to NrdR-boxes. The sequence is that of Transcriptional repressor NrdR from Burkholderia cenocepacia (strain HI2424).